The primary structure comprises 202 residues: Imidazoleglycerol-phosphate dehydratase (202 aa).

This sequence belongs to the imidazoleglycerol-phosphate dehydratase family.

Its subcellular location is the cytoplasm. The enzyme catalyses D-erythro-1-(imidazol-4-yl)glycerol 3-phosphate = 3-(imidazol-4-yl)-2-oxopropyl phosphate + H2O. It functions in the pathway amino-acid biosynthesis; L-histidine biosynthesis; L-histidine from 5-phospho-alpha-D-ribose 1-diphosphate: step 6/9. This Clavibacter michiganensis subsp. michiganensis (strain NCPPB 382) protein is Imidazoleglycerol-phosphate dehydratase.